The chain runs to 507 residues: Ribosomal protein uS12 methylthiotransferase RimO (507 aa).

One can recognise an MTTase N-terminal domain in the interval 13–124 (RRVALLTLGC…ISDRLGAVLA (112 aa)). Positions 22, 58, and 87 each coordinate [4Fe-4S] cluster. Residues 150-175 (AAVSLPGHGTRAAAAGPGGRSAPVEV) form a disordered region. Residues 155–172 (PGHGTRAAAAGPGGRSAP) are compositionally biased toward low complexity. The Radical SAM core domain maps to 191 to 422 (LDTGPVASLK…ALADELCAQR (232 aa)). The [4Fe-4S] cluster site is built by C205, C209, and C212. The TRAM domain maps to 424-497 (EQRLGSTVQV…GVDLVAVPDG (74 aa)).

The protein belongs to the methylthiotransferase family. RimO subfamily. [4Fe-4S] cluster is required as a cofactor.

Its subcellular location is the cytoplasm. It carries out the reaction L-aspartate(89)-[ribosomal protein uS12]-hydrogen + (sulfur carrier)-SH + AH2 + 2 S-adenosyl-L-methionine = 3-methylsulfanyl-L-aspartate(89)-[ribosomal protein uS12]-hydrogen + (sulfur carrier)-H + 5'-deoxyadenosine + L-methionine + A + S-adenosyl-L-homocysteine + 2 H(+). Its function is as follows. Catalyzes the methylthiolation of an aspartic acid residue of ribosomal protein uS12. This is Ribosomal protein uS12 methylthiotransferase RimO from Salinispora arenicola (strain CNS-205).